Consider the following 75-residue polypeptide: UPF0352 protein ETA_12580 (75 aa).

The protein belongs to the UPF0352 family.

In Erwinia tasmaniensis (strain DSM 17950 / CFBP 7177 / CIP 109463 / NCPPB 4357 / Et1/99), this protein is UPF0352 protein ETA_12580.